The chain runs to 432 residues: Muscle cell intermediate filament protein OV71 (432 aa).

Residues 1-111 (KLIDELEEYK…RVHDQEISEL (111 aa)) form a coil 1B region. One can recognise an IF rod domain in the interval 1–277 (KLIDELEEYK…KMLEGEENRA (277 aa)). Residues 112–128 (QAMAARDTTSENREYFK) are linker 12. The tract at residues 129 to 277 (NELSSAIRDI…KMLEGEENRA (149 aa)) is coil 2. The tail stretch occupies residues 278-432 (GLRQLVEQVV…HIQRSSHTIS (155 aa)). Positions 310–427 (SRTSFQRSAK…EERASHIQRS (118 aa)) constitute an LTD domain.

It belongs to the intermediate filament family.

This is Muscle cell intermediate filament protein OV71 (OV71) from Onchocerca volvulus.